The sequence spans 180 residues: NADH-quinone oxidoreductase subunit I (180 aa).

4Fe-4S ferredoxin-type domains are found at residues 50 to 80 and 90 to 119; these read LTRD…LQKA and EFFR…LTPD. Cysteine 60, cysteine 63, cysteine 66, cysteine 70, cysteine 99, cysteine 102, cysteine 105, and cysteine 109 together coordinate [4Fe-4S] cluster.

The protein belongs to the complex I 23 kDa subunit family. NDH-1 is composed of 13 different subunits. Subunits NuoA, H, J, K, L, M, N constitute the membrane sector of the complex. [4Fe-4S] cluster serves as cofactor.

The protein resides in the cell inner membrane. The enzyme catalyses a quinone + NADH + 5 H(+)(in) = a quinol + NAD(+) + 4 H(+)(out). NDH-1 shuttles electrons from NADH, via FMN and iron-sulfur (Fe-S) centers, to quinones in the respiratory chain. The immediate electron acceptor for the enzyme in this species is believed to be ubiquinone. Couples the redox reaction to proton translocation (for every two electrons transferred, four hydrogen ions are translocated across the cytoplasmic membrane), and thus conserves the redox energy in a proton gradient. In Salmonella choleraesuis (strain SC-B67), this protein is NADH-quinone oxidoreductase subunit I.